Consider the following 935-residue polypeptide: Progesterone receptor (935 aa).

A disordered region spans residues 1-49 (MTELKAKGLRAPHVAGSPSSPKVGSPLPCRQATGQFPGSQTSDTLPEVS). The AF3; mediates transcriptional activation stretch occupies residues 1–164 (MTELKAKGLR…PATQRVLSPL (164 aa)). Positions 1 to 568 (MTELKAKGLR…YSFESLPQKI (568 aa)) are modulating, Pro-Rich. Residue Ser20 is modified to Phosphoserine. Residues 32 to 44 (ATGQFPGSQTSDT) show a composition bias toward polar residues. An LXXL motif 1 motif is present at residues 55 to 59 (LDGLL). The disordered stretch occupies residues 62 to 158 (RICQAQDPPD…EDPPAAPATQ (97 aa)). Ser81 carries the phosphoserine modification. The LXXL motif 2 signature appears at 115 to 119 (LDTLW). Phosphoserine is present on residues Ser130 and Ser162. Residues 165–305 (MSRSGGKAGD…LATTVTDFIH (141 aa)) form a mediates transcriptional transrepression region. The Nuclear localization signal signature appears at 183–187 (KVLPR). A disordered region spans residues 187 to 233 (RGLSPSRQLLLPTSGSPHWSGAPVKPSPQPAAVEVEEEDGSESEDSA). Ser190 carries the post-translational modification Phosphoserine. Polar residues predominate over residues 191-203 (PSRQLLLPTSGSP). Position 213 is a phosphoserine (Ser213). Over residues 220–231 (EVEEEDGSESED) the composition is skewed to acidic residues. Ser294 is subject to Phosphoserine; by MAPK1. The tract at residues 328 to 365 (SYDGGSGAASAFAPPRSSPSASSTPVPGSDFPDCAYAP) is disordered. Low complexity predominate over residues 335–356 (AASAFAPPRSSPSASSTPVPGS). Phosphoserine; by MAPK is present on Ser345. A Glycyl lysine isopeptide (Lys-Gly) (interchain with G-Cter in SUMO); alternate cross-link involves residue Lys388. A Glycyl lysine isopeptide (Lys-Gly) (interchain with G-Cter in ubiquitin); alternate cross-link involves residue Lys388. The tract at residues 390–452 (EEEGAEASTR…PASASVSSAS (63 aa)) is disordered. At Ser400 the chain carries Phosphoserine; by CDK2. Pro residues predominate over residues 418–433 (PLGPPPPLPPRAPPSR). Over residues 434–452 (PGEAAVTAAPASASVSSAS) the composition is skewed to low complexity. Positions 456–548 (STLECILYKA…VYPPYLNYLR (93 aa)) are AF1; mediates transcriptional activation. Residue Lys533 forms a Glycyl lysine isopeptide (Lys-Gly) (interchain with G-Cter in SUMO) linkage. 2 consecutive NR C4-type zinc fingers follow at residues 569–589 (CLIC…CGSC) and 605–629 (CAGR…LRKC). Positions 569–641 (CLICGDEASG…AGMVLGGRKF (73 aa)) form a DNA-binding region, nuclear receptor. Ser678 carries the phosphoserine modification. An NR LBD domain is found at 681–915 (QDIQLIPPLI…EFPEMMSEVI (235 aa)). Residues 689 to 935 (LINLLLSIEP…MVKPLLFHKK (247 aa)) are AF2; mediates transcriptional activation. Position 768 (Arg768) interacts with progesterone.

Belongs to the nuclear hormone receptor family. In terms of assembly, interacts with SMARD1 and UNC45A. Interacts with CUEDC2; the interaction promotes ubiquitination, decreases sumoylation, and represses transcriptional activity. Interacts with PIAS3; the interaction promotes sumoylation of PR in a hormone-dependent manner, inhibits DNA-binding, and alters nuclear export. Interacts with SP1; the interaction requires ligand-induced phosphorylation on Ser-345 by ERK1/2-MAPK. Interacts with PRMT2. Interacts with NCOA2 and NCOA1. Interacts with KLF9. Interacts with GTF2B. In terms of processing, phosphorylated on multiple serine sites. Several of these sites are hormone-dependent. Phosphorylation on Ser-294 is highly hormone-dependent and modulates ubiquitination and sumoylation on Lys-388. Phosphorylation on Ser-345 also requires induction by hormone. Basal phosphorylation on Ser-81, Ser-162, Ser-190 and Ser-400 is increased in response to progesterone and can be phosphorylated in vitro by the CDK2-A1 complex. Increased levels of phosphorylation on Ser-400 also in the presence of EGF, heregulin, IGF, PMA and FBS. Phosphorylation at this site by CDK2 is ligand-independent, and increases nuclear translocation and transcriptional activity. Phosphorylation at Ser-162 and Ser-294, but not at Ser-190, is impaired during the G(2)/M phase of the cell cycle. Phosphorylation on Ser-345 by ERK1/2 MAPK is required for interaction with SP1. Post-translationally, sumoylation is hormone-dependent and represses transcriptional activity. Sumoylation on all three sites is enhanced by PIAS3. Desumoylated by SENP1. Sumoylation on Lys-388, the main site of sumoylation, is repressed by ubiquitination on the same site, and modulated by phosphorylation at Ser-294. Ubiquitination is hormone-dependent and represses sumoylation on the same site. Promoted by MAPK-mediated phosphorylation on Ser-294. Ubiquitinated by UBR5, leading to its degradation: UBR5 specifically recognizes and binds ligand-bound PGR when it is not associated with coactivators (NCOAs). In presence of NCOAs, the UBR5-degron is not accessible, preventing its ubiquitination and degradation. In terms of processing, palmitoylated by ZDHHC7 and ZDHHC21. Palmitoylation is required for plasma membrane targeting and for rapid intracellular signaling via ERK and AKT kinases and cAMP generation.

It localises to the nucleus. Its subcellular location is the cytoplasm. The steroid hormones and their receptors are involved in the regulation of eukaryotic gene expression and affect cellular proliferation and differentiation in target tissues. Transcriptional activator of several progesteron-dependent promoters in a variety of cell types. Involved in activation of SRC-dependent MAPK signaling on hormone stimulation. This is Progesterone receptor (PGR) from Sapajus apella (Brown-capped capuchin).